The following is a 272-amino-acid chain: 4-hydroxy-tetrahydrodipicolinate reductase (272 aa).

NAD(+) is bound by residues 12-17 and Glu38; that span reads GAAGRM. Residue Arg39 coordinates NADP(+). NAD(+) is bound by residues 102-104 and 126-129; these read GTT and SGNM. His160 functions as the Proton donor/acceptor in the catalytic mechanism. Residue His161 participates in (S)-2,3,4,5-tetrahydrodipicolinate binding. Residue Lys164 is the Proton donor of the active site. (S)-2,3,4,5-tetrahydrodipicolinate is bound at residue 170-171; that stretch reads GT.

This sequence belongs to the DapB family.

The protein localises to the cytoplasm. It carries out the reaction (S)-2,3,4,5-tetrahydrodipicolinate + NAD(+) + H2O = (2S,4S)-4-hydroxy-2,3,4,5-tetrahydrodipicolinate + NADH + H(+). The catalysed reaction is (S)-2,3,4,5-tetrahydrodipicolinate + NADP(+) + H2O = (2S,4S)-4-hydroxy-2,3,4,5-tetrahydrodipicolinate + NADPH + H(+). The protein operates within amino-acid biosynthesis; L-lysine biosynthesis via DAP pathway; (S)-tetrahydrodipicolinate from L-aspartate: step 4/4. Catalyzes the conversion of 4-hydroxy-tetrahydrodipicolinate (HTPA) to tetrahydrodipicolinate. In Sinorhizobium medicae (strain WSM419) (Ensifer medicae), this protein is 4-hydroxy-tetrahydrodipicolinate reductase.